Consider the following 420-residue polypeptide: Glycogen synthase kinase-3 beta (420 aa).

Positions 1 to 22 (MSGRPRTTSFAESCKPVQQPSA) are enriched in polar residues. The disordered stretch occupies residues 1 to 53 (MSGRPRTTSFAESCKPVQQPSAFGSMKVSRDKDGSKVTTVVATPGQGPDRPQE). Residue serine 9 is modified to Phosphoserine; by PKB/AKT1, RPS6KA3 and SGK3. The S-palmitoyl cysteine moiety is linked to residue cysteine 14. In terms of domain architecture, Protein kinase spans 56–340 (YTDTKVIGNG…PLEACAHSFF (285 aa)). Residues 62 to 70 (IGNGSFGVV) and lysine 85 contribute to the ATP site. Aspartate 181 serves as the catalytic Proton acceptor. Phosphotyrosine is present on tyrosine 216. Low complexity predominate over residues 386 to 401 (AAASTPTNATAASDAN). The segment at 386–420 (AAASTPTNATAASDANTGDRGQTNNAASASASNST) is disordered. A Phosphoserine modification is found at serine 389. Phosphothreonine occurs at positions 390 and 402. The segment covering 409 to 420 (NNAASASASNST) has biased composition (low complexity).

It belongs to the protein kinase superfamily. CMGC Ser/Thr protein kinase family. GSK-3 subfamily. As to quaternary structure, monomer. Interacts with ARRB2, DISC1 and ZBED3. Interacts with CABYR, MMP2, MUC1, NIN and PRUNE1. Interacts with AXIN1; the interaction mediates hyperphosphorylation of CTNNB1 leading to its ubiquitination and destruction. Interacts with and phosphorylates SNAI1. Interacts with DNM1L (via a C-terminal domain). Found in a complex composed of MACF1, APC, AXIN1, CTNNB1 and GSK3B. Interacts with SGK3. Interacts with DAB2IP (via C2 domain); the interaction stimulates GSK3B kinase activation. Interacts (via C2 domain) with PPP2CA. Interacts with the CLOCK-BMAL1 heterodimer. Interacts with the BMAL1. Interacts with CTNND2. Interacts with NCYM. The complex composed, at least, of APC, CTNNB1 and GSK3B interacts with JPT1; the interaction requires the inactive form of GSK3B (phosphorylated at 'Ser-9'). Forms a complex composed of PRKAR2A or PRKAR2B, GSK3B and GSKIP through GSKIP interaction; facilitates PKA-induced phosphorylation and regulates GSK3B activity. Interacts with GSKIP. Interacts with GID8. Interacts with PIWIL2. Interacts with LMBR1L. Interacts with DDX3X. Interacts with BIRC2. Interacts with TNFRSF10B; TNFRSF10B stimulation inhibits GSK3B kinase activity. Interacts with RICTOR; the interaction results in phosphorylation of RICTOR at 'Thr-1695' by GSK3B which facilitates FBXW7-mediated ubiquitination and subsequent degradation of RICTOR. Found in a complex with SLC39A6, SLC39A10 and with GSK3B that controls NCAM1 phosphorylation. Interacts with PKP3 (via ARM repeats); the interaction may be involved in PKP3 protein degradation. In terms of processing, phosphorylated by AKT1 and ILK1. Upon insulin-mediated signaling, the activated PKB/AKT1 protein kinase phosphorylates and deactivates GSK3B, resulting in the dephosphorylation and activation of GYS1. Activated by phosphorylation at Tyr-216. Inactivated by phosphorylation at Ser-9. Phosphorylated in a circadian manner in the hippocampus. Post-translationally, mono-ADP-ribosylation by PARP10 negatively regulates kinase activity. Palmitoylated. Palmitoylation by ZDHHC4 prevents AKT1-mediated phosphorylation. Expressed in testis, thymus, prostate and ovary and weakly expressed in lung, brain and kidney. Colocalizes with EIF2AK2/PKR and TAU in the Alzheimer disease (AD) brain.

The protein resides in the cytoplasm. It localises to the nucleus. Its subcellular location is the cell membrane. It catalyses the reaction L-seryl-[tau protein] + ATP = O-phospho-L-seryl-[tau protein] + ADP + H(+). The enzyme catalyses L-threonyl-[tau protein] + ATP = O-phospho-L-threonyl-[tau protein] + ADP + H(+). The catalysed reaction is L-seryl-[protein] + ATP = O-phospho-L-seryl-[protein] + ADP + H(+). It carries out the reaction L-threonyl-[protein] + ATP = O-phospho-L-threonyl-[protein] + ADP + H(+). With respect to regulation, activated by phosphorylation at Tyr-216. In response to insulin, inhibited by phosphorylation at Ser-9 by PKB/AKT1 and RPS6KA3; phosphorylation at this site causes a conformational change, preventing access of substrates to the active site. Inhibited by IL22 treatment which also triggers phosphorylation at Ser-9, promoting inactivation. Inhibited by lithium. Constitutively active protein kinase that acts as a negative regulator in the hormonal control of glucose homeostasis, Wnt signaling and regulation of transcription factors and microtubules, by phosphorylating and inactivating glycogen synthase (GYS1 or GYS2), EIF2B, CTNNB1/beta-catenin, APC, AXIN1, DPYSL2/CRMP2, JUN, NFATC1/NFATC, MAPT/TAU and MACF1. Requires primed phosphorylation of the majority of its substrates. In skeletal muscle, contributes to insulin regulation of glycogen synthesis by phosphorylating and inhibiting GYS1 activity and hence glycogen synthesis. May also mediate the development of insulin resistance by regulating activation of transcription factors. Regulates protein synthesis by controlling the activity of initiation factor 2B (EIF2BE/EIF2B5) in the same manner as glycogen synthase. In Wnt signaling, GSK3B forms a multimeric complex with APC, AXIN1 and CTNNB1/beta-catenin and phosphorylates the N-terminus of CTNNB1 leading to its degradation mediated by ubiquitin/proteasomes. Phosphorylates JUN at sites proximal to its DNA-binding domain, thereby reducing its affinity for DNA. Phosphorylates NFATC1/NFATC on conserved serine residues promoting NFATC1/NFATC nuclear export, shutting off NFATC1/NFATC gene regulation, and thereby opposing the action of calcineurin. Phosphorylates MAPT/TAU on 'Thr-548', decreasing significantly MAPT/TAU ability to bind and stabilize microtubules. MAPT/TAU is the principal component of neurofibrillary tangles in Alzheimer disease. Plays an important role in ERBB2-dependent stabilization of microtubules at the cell cortex. Phosphorylates MACF1, inhibiting its binding to microtubules which is critical for its role in bulge stem cell migration and skin wound repair. Probably regulates NF-kappa-B (NFKB1) at the transcriptional level and is required for the NF-kappa-B-mediated anti-apoptotic response to TNF-alpha (TNF/TNFA). Negatively regulates replication in pancreatic beta-cells, resulting in apoptosis, loss of beta-cells and diabetes. Through phosphorylation of the anti-apoptotic protein MCL1, may control cell apoptosis in response to growth factors deprivation. Phosphorylates MUC1 in breast cancer cells, decreasing the interaction of MUC1 with CTNNB1/beta-catenin. Is necessary for the establishment of neuronal polarity and axon outgrowth. Phosphorylates MARK2, leading to inhibition of its activity. Phosphorylates SIK1 at 'Thr-182', leading to sustainment of its activity. Phosphorylates ZC3HAV1 which enhances its antiviral activity. Phosphorylates SNAI1, leading to its ubiquitination and proteasomal degradation. Phosphorylates SFPQ at 'Thr-687' upon T-cell activation. Phosphorylates NR1D1 st 'Ser-55' and 'Ser-59' and stabilizes it by protecting it from proteasomal degradation. Regulates the circadian clock via phosphorylation of the major clock components including BMAL1, CLOCK and PER2. Phosphorylates FBXL2 at 'Thr-404' and primes it for ubiquitination by the SCF(FBXO3) complex and proteasomal degradation. Phosphorylates CLOCK AT 'Ser-427' and targets it for proteasomal degradation. Phosphorylates BMAL1 at 'Ser-17' and 'Ser-21' and primes it for ubiquitination and proteasomal degradation. Phosphorylates OGT at 'Ser-3' or 'Ser-4' which positively regulates its activity. Phosphorylates MYCN in neuroblastoma cells which may promote its degradation. Regulates the circadian rhythmicity of hippocampal long-term potentiation and BMAL1 and PER2 expression. Acts as a regulator of autophagy by mediating phosphorylation of KAT5/TIP60 under starvation conditions, activating KAT5/TIP60 acetyltransferase activity and promoting acetylation of key autophagy regulators, such as ULK1 and RUBCNL/Pacer. Negatively regulates extrinsic apoptotic signaling pathway via death domain receptors. Promotes the formation of an anti-apoptotic complex, made of DDX3X, BRIC2 and GSK3B, at death receptors, including TNFRSF10B. The anti-apoptotic function is most effective with weak apoptotic signals and can be overcome by stronger stimulation. Phosphorylates E2F1, promoting the interaction between E2F1 and USP11, stabilizing E2F1 and promoting its activity. Phosphorylates mTORC2 complex component RICTOR at 'Ser-1235' in response to endoplasmic stress, inhibiting mTORC2. Phosphorylates mTORC2 complex component RICTOR at 'Thr-1695' which facilitates FBXW7-mediated ubiquitination and subsequent degradation of RICTOR. Phosphorylates FXR1, promoting FXR1 ubiquitination by the SCF(FBXO4) complex and FXR1 degradation by the proteasome. Phosphorylates interleukin-22 receptor subunit IL22RA1, preventing its proteasomal degradation. This chain is Glycogen synthase kinase-3 beta, found in Homo sapiens (Human).